The primary structure comprises 146 residues: Hut operon positive regulatory protein (146 aa).

This sequence belongs to the HutP family. As to quaternary structure, homohexamer.

Its function is as follows. Antiterminator that binds to cis-acting regulatory sequences on the mRNA in the presence of histidine, thereby suppressing transcription termination and activating the hut operon for histidine utilization. The protein is Hut operon positive regulatory protein of Bacillus cytotoxicus (strain DSM 22905 / CIP 110041 / 391-98 / NVH 391-98).